Consider the following 184-residue polypeptide: ATP synthase subunit b (184 aa).

Residues 4–24 (LSVLFALVASPALAASGPFFS) traverse the membrane as a helical segment.

The protein belongs to the ATPase B chain family. In terms of assembly, F-type ATPases have 2 components, F(1) - the catalytic core - and F(0) - the membrane proton channel. F(1) has five subunits: alpha(3), beta(3), gamma(1), delta(1), epsilon(1). F(0) has three main subunits: a(1), b(2) and c(10-14). The alpha and beta chains form an alternating ring which encloses part of the gamma chain. F(1) is attached to F(0) by a central stalk formed by the gamma and epsilon chains, while a peripheral stalk is formed by the delta and b chains.

Its subcellular location is the cell inner membrane. Functionally, f(1)F(0) ATP synthase produces ATP from ADP in the presence of a proton or sodium gradient. F-type ATPases consist of two structural domains, F(1) containing the extramembraneous catalytic core and F(0) containing the membrane proton channel, linked together by a central stalk and a peripheral stalk. During catalysis, ATP synthesis in the catalytic domain of F(1) is coupled via a rotary mechanism of the central stalk subunits to proton translocation. Component of the F(0) channel, it forms part of the peripheral stalk, linking F(1) to F(0). This Paracoccus denitrificans (strain Pd 1222) protein is ATP synthase subunit b.